Here is a 220-residue protein sequence, read N- to C-terminus: Phosphatidylserine decarboxylase proenzyme (220 aa).

Ser-188 serves as the catalytic Schiff-base intermediate with substrate; via pyruvic acid. Pyruvic acid (Ser); by autocatalysis is present on Ser-188.

Belongs to the phosphatidylserine decarboxylase family. PSD-A subfamily. Heterodimer of a large membrane-associated beta subunit and a small pyruvoyl-containing alpha subunit. The cofactor is pyruvate. In terms of processing, is synthesized initially as an inactive proenzyme. Formation of the active enzyme involves a self-maturation process in which the active site pyruvoyl group is generated from an internal serine residue via an autocatalytic post-translational modification. Two non-identical subunits are generated from the proenzyme in this reaction, and the pyruvate is formed at the N-terminus of the alpha chain, which is derived from the carboxyl end of the proenzyme. The post-translation cleavage follows an unusual pathway, termed non-hydrolytic serinolysis, in which the side chain hydroxyl group of the serine supplies its oxygen atom to form the C-terminus of the beta chain, while the remainder of the serine residue undergoes an oxidative deamination to produce ammonia and the pyruvoyl prosthetic group on the alpha chain.

The protein resides in the cell membrane. It catalyses the reaction a 1,2-diacyl-sn-glycero-3-phospho-L-serine + H(+) = a 1,2-diacyl-sn-glycero-3-phosphoethanolamine + CO2. Its pathway is phospholipid metabolism; phosphatidylethanolamine biosynthesis; phosphatidylethanolamine from CDP-diacylglycerol: step 2/2. Its function is as follows. Catalyzes the formation of phosphatidylethanolamine (PtdEtn) from phosphatidylserine (PtdSer). This Cytophaga hutchinsonii (strain ATCC 33406 / DSM 1761 / CIP 103989 / NBRC 15051 / NCIMB 9469 / D465) protein is Phosphatidylserine decarboxylase proenzyme.